Here is a 272-residue protein sequence, read N- to C-terminus: Phosphoglycolate phosphatase (272 aa).

Asp-19 functions as the Nucleophile in the catalytic mechanism. Mg(2+) is bound by residues Asp-19, Asp-21, and Asp-182.

Belongs to the HAD-like hydrolase superfamily. CbbY/CbbZ/Gph/YieH family. The cofactor is Mg(2+).

It carries out the reaction 2-phosphoglycolate + H2O = glycolate + phosphate. The protein operates within organic acid metabolism; glycolate biosynthesis; glycolate from 2-phosphoglycolate: step 1/1. In terms of biological role, specifically catalyzes the dephosphorylation of 2-phosphoglycolate. Is involved in the dissimilation of the intracellular 2-phosphoglycolate formed during the DNA repair of 3'-phosphoglycolate ends, a major class of DNA lesions induced by oxidative stress. The protein is Phosphoglycolate phosphatase of Pseudomonas syringae pv. tomato (strain ATCC BAA-871 / DC3000).